The following is a 268-amino-acid chain: 4-hydroxy-tetrahydrodipicolinate reductase (268 aa).

NAD(+)-binding positions include 8–13 and Asp-35; that span reads GAAGRM. Arg-36 contacts NADP(+). NAD(+) contacts are provided by residues 99 to 101 and 123 to 126; these read GTT and AANF. The active-site Proton donor/acceptor is the His-156. Residue His-157 coordinates (S)-2,3,4,5-tetrahydrodipicolinate. The Proton donor role is filled by Lys-160. Residue 166–167 coordinates (S)-2,3,4,5-tetrahydrodipicolinate; that stretch reads GT.

Belongs to the DapB family.

It localises to the cytoplasm. It catalyses the reaction (S)-2,3,4,5-tetrahydrodipicolinate + NAD(+) + H2O = (2S,4S)-4-hydroxy-2,3,4,5-tetrahydrodipicolinate + NADH + H(+). The catalysed reaction is (S)-2,3,4,5-tetrahydrodipicolinate + NADP(+) + H2O = (2S,4S)-4-hydroxy-2,3,4,5-tetrahydrodipicolinate + NADPH + H(+). It participates in amino-acid biosynthesis; L-lysine biosynthesis via DAP pathway; (S)-tetrahydrodipicolinate from L-aspartate: step 4/4. Its function is as follows. Catalyzes the conversion of 4-hydroxy-tetrahydrodipicolinate (HTPA) to tetrahydrodipicolinate. This is 4-hydroxy-tetrahydrodipicolinate reductase from Pseudomonas aeruginosa (strain LESB58).